We begin with the raw amino-acid sequence, 809 residues long: Plasminogen (809 aa).

Positions 1–19 are cleaved as a signal peptide; sequence MDHKEVVLLLLLFLKSGLG. The PAN domain maps to 20-98; sequence DSLDDYVNTQ…RDVVLFEKRI (79 aa). 24 disulfides stabilise this stretch: Cys49–Cys73, Cys53–Cys61, Cys103–Cys181, Cys124–Cys164, Cys152–Cys176, Cys185–Cys262, Cys188–Cys316, Cys206–Cys245, Cys234–Cys257, Cys275–Cys352, Cys296–Cys335, Cys324–Cys347, Cys377–Cys454, Cys398–Cys437, Cys426–Cys449, Cys480–Cys559, Cys501–Cys542, Cys530–Cys554, Cys566–Cys684, Cys576–Cys584, Cys606–Cys622, Cys698–Cys765, Cys728–Cys744, and Cys755–Cys783. Kringle domains follow at residues 103–181 and 185–262; these read CKTG…IPEC and CMHC…IPRC. O-linked (GalNAc...) threonine glycosylation is present at Thr268. Kringle domains are found at residues 275–352, 377–454, and 480–559; these read CLKG…IPSC, CYRG…LKKC, and CMFG…VPQC. Asn308 carries N-linked (GlcNAc...) asparagine glycosylation. The Peptidase S1 domain maps to 580-807; it reads VVGGCVSIPH…FVTWIEEIMR (228 aa). Ser596 is subject to Phosphoserine. Active-site charge relay system residues include His621 and Asp664. Residue Ser759 is the Charge relay system of the active site.

This sequence belongs to the peptidase S1 family. Plasminogen subfamily. Interacts with CSPG4 and AMOT. Interacts (via the Kringle domains) with HRG; the interaction tethers PLG to the cell surface and enhances its activation. Interacts (via Kringle 4 domain) with ADA; the interaction stimulates PLG activation when in complex with DPP4. Angiostatin: Interacts with ATP5F1A; the interaction inhibits most of the angiogenic effects of angiostatin. Post-translationally, N-linked glycan contains N-acetyllactosamine, sialic acid and is core fucosylated. O-linked glycans consist of Gal-GalNAc disaccharide which is modified with up to 2 sialic acid residues (microheterogeneity). In the presence of the inhibitor, the activation involves only cleavage after Arg-579, yielding two chains held together by two disulfide bonds. In the absence of the inhibitor, the activation involves additionally the removal of the activation peptide.

The protein resides in the secreted. The enzyme catalyses Preferential cleavage: Lys-|-Xaa &gt; Arg-|-Xaa, higher selectivity than trypsin. Converts fibrin into soluble products.. With respect to regulation, converted into plasmin by plasminogen activators, both plasminogen and its activator being bound to fibrin. Cannot be activated with streptokinase. In terms of biological role, plasmin dissolves the fibrin of blood clots and acts as a proteolytic factor in a variety of other processes including embryonic development, tissue remodeling, tumor invasion, and inflammation. In ovulation, weakens the walls of the Graafian follicle. It activates the urokinase-type plasminogen activator, collagenases and several complement zymogens, such as C1, C4 and C5. Cleavage of fibronectin and laminin leads to cell detachment and apoptosis. Also cleaves fibrin, thrombospondin and von Willebrand factor. Its role in tissue remodeling and tumor invasion may be modulated by CSPG4. Binds to cells. The polypeptide is Plasminogen (PLG) (Sus scrofa (Pig)).